The primary structure comprises 343 residues: MSDELTTTVYYDEDADVSTINDETVAVLGYGSQGHAHALNLHESGVDVIVGLRQDSSSWADAEDAGLRVETPDVAAGEADRVVMLVPDTIQPAVYEAIEDELDAGDTLQFAHGFNIHYGQIEPPEDVDVTMVAPKSPGHLVRRTYERGEGTPGLIAVYQDATGNAKQESLAYAKGIGCTRAGVIETSFQEEVETDLFGEQAVLCGGVTEMVKAGFETLVDAGYAPEMAYFECLNELKLIVDLMYEGGHMGMWNSVSDTAEYGGLTRGEEVIDREGMEKILEEVQNGEFAREWINENQANRPAYKQYRDAEQNHQIEAVGENLRELFAWGEDADAETTEAPADD.

The 180-residue stretch at 7–186 folds into the KARI N-terminal Rossmann domain; sequence TTVYYDEDAD…GCTRAGVIET (180 aa). Residues 30-33, arginine 53, serine 56, serine 58, and 88-91 contribute to the NADP(+) site; these read YGSQ and DTIQ. Histidine 112 is an active-site residue. Residue glycine 138 coordinates NADP(+). Residues 187–329 enclose the KARI C-terminal knotted domain; that stretch reads SFQEEVETDL…ENLRELFAWG (143 aa). Residues aspartate 195, glutamate 199, glutamate 231, and glutamate 235 each contribute to the Mg(2+) site. A substrate-binding site is contributed by serine 256.

This sequence belongs to the ketol-acid reductoisomerase family. Mg(2+) is required as a cofactor.

It carries out the reaction (2R)-2,3-dihydroxy-3-methylbutanoate + NADP(+) = (2S)-2-acetolactate + NADPH + H(+). The catalysed reaction is (2R,3R)-2,3-dihydroxy-3-methylpentanoate + NADP(+) = (S)-2-ethyl-2-hydroxy-3-oxobutanoate + NADPH + H(+). It participates in amino-acid biosynthesis; L-isoleucine biosynthesis; L-isoleucine from 2-oxobutanoate: step 2/4. It functions in the pathway amino-acid biosynthesis; L-valine biosynthesis; L-valine from pyruvate: step 2/4. In terms of biological role, involved in the biosynthesis of branched-chain amino acids (BCAA). Catalyzes an alkyl-migration followed by a ketol-acid reduction of (S)-2-acetolactate (S2AL) to yield (R)-2,3-dihydroxy-isovalerate. In the isomerase reaction, S2AL is rearranged via a Mg-dependent methyl migration to produce 3-hydroxy-3-methyl-2-ketobutyrate (HMKB). In the reductase reaction, this 2-ketoacid undergoes a metal-dependent reduction by NADPH to yield (R)-2,3-dihydroxy-isovalerate. The sequence is that of Ketol-acid reductoisomerase (NADP(+)) from Haloarcula marismortui (strain ATCC 43049 / DSM 3752 / JCM 8966 / VKM B-1809) (Halobacterium marismortui).